The chain runs to 356 residues: 3-dehydroquinate synthase (356 aa).

NAD(+)-binding positions include 69–74, 103–107, 127–128, Lys-140, and Lys-149; these read DGEQYK, GVVGD, and TT. Zn(2+) is bound by residues Glu-182, His-245, and His-262.

The protein belongs to the sugar phosphate cyclases superfamily. Dehydroquinate synthase family. The cofactor is Co(2+). It depends on Zn(2+) as a cofactor. NAD(+) serves as cofactor.

The protein localises to the cytoplasm. It catalyses the reaction 7-phospho-2-dehydro-3-deoxy-D-arabino-heptonate = 3-dehydroquinate + phosphate. It participates in metabolic intermediate biosynthesis; chorismate biosynthesis; chorismate from D-erythrose 4-phosphate and phosphoenolpyruvate: step 2/7. In terms of biological role, catalyzes the conversion of 3-deoxy-D-arabino-heptulosonate 7-phosphate (DAHP) to dehydroquinate (DHQ). The polypeptide is 3-dehydroquinate synthase (Pseudoalteromonas translucida (strain TAC 125)).